We begin with the raw amino-acid sequence, 410 residues long: Acetate kinase (410 aa).

Asparagine 7 contributes to the Mg(2+) binding site. Lysine 14 lines the ATP pocket. Arginine 98 contacts substrate. Catalysis depends on aspartate 155, which acts as the Proton donor/acceptor. ATP is bound by residues 215–219 (HLGNG), 290–292 (DMR), and 338–342 (GIGEN). Residue glutamate 392 participates in Mg(2+) binding.

The protein belongs to the acetokinase family. Homodimer. It depends on Mg(2+) as a cofactor. The cofactor is Mn(2+).

It localises to the cytoplasm. The catalysed reaction is acetate + ATP = acetyl phosphate + ADP. Its pathway is metabolic intermediate biosynthesis; acetyl-CoA biosynthesis; acetyl-CoA from acetate: step 1/2. Functionally, catalyzes the formation of acetyl phosphate from acetate and ATP. Can also catalyze the reverse reaction. This chain is Acetate kinase, found in Kocuria rhizophila (strain ATCC 9341 / DSM 348 / NBRC 103217 / DC2201).